We begin with the raw amino-acid sequence, 166 residues long: CDP-archaeol synthase (166 aa).

4 helical membrane passes run 39 to 59 (IRGFVGGVTAGILIGAVQMYA), 61 to 81 (ISGLVPWFPPHTLTAVILLAI), 104 to 124 (EWFLVDQLDFVVGALLLTLLF), and 127 to 147 (IWMLNTMTIPLLIVILVLTPL).

The protein belongs to the CDP-archaeol synthase family. Mg(2+) is required as a cofactor.

The protein resides in the cell membrane. The catalysed reaction is 2,3-bis-O-(geranylgeranyl)-sn-glycerol 1-phosphate + CTP + H(+) = CDP-2,3-bis-O-(geranylgeranyl)-sn-glycerol + diphosphate. Its pathway is membrane lipid metabolism; glycerophospholipid metabolism. Its function is as follows. Catalyzes the formation of CDP-2,3-bis-(O-geranylgeranyl)-sn-glycerol (CDP-archaeol) from 2,3-bis-(O-geranylgeranyl)-sn-glycerol 1-phosphate (DGGGP) and CTP. This reaction is the third ether-bond-formation step in the biosynthesis of archaeal membrane lipids. The protein is CDP-archaeol synthase of Methanospirillum hungatei JF-1 (strain ATCC 27890 / DSM 864 / NBRC 100397 / JF-1).